Consider the following 119-residue polypeptide: MARFVVVALLVLLSLSGLEAIQHAPKIQVYSRHPAENGKPNFLNCYVSGFHPSDIEVDLLKNGKKIEKVEHSDLSFSKDWSFYLLYYTEFTPNEKDEYACRVSHVTLSTPKTVKWDRNM.

The N-terminal stretch at 1–20 is a signal peptide; that stretch reads MARFVVVALLVLLSLSGLEA. Positions 25–114 constitute an Ig-like C1-type domain; that stretch reads PKIQVYSRHP…VTLSTPKTVK (90 aa). The cysteines at positions 45 and 100 are disulfide-linked.

It belongs to the beta-2-microglobulin family. Heterodimer of an alpha chain and a beta chain. Beta-2-microglobulin is the beta-chain of major histocompatibility complex class I molecules.

Its subcellular location is the secreted. Component of the class I major histocompatibility complex (MHC). Involved in the presentation of peptide antigens to the immune system. This chain is Beta-2-microglobulin (B2M), found in Aotus lemurinus (Gray-bellied night monkey).